Reading from the N-terminus, the 530-residue chain is Negative elongation factor A (530 aa).

In terms of domain architecture, HDAg spans 89–248 (WVLMVADILK…TPIPPSRTPL (160 aa)). The NELF-C/D-binding stretch occupies residues 125–188 (REKVSECEAS…LQKSTETAQQ (64 aa)). Threonine 157 carries the post-translational modification Phosphothreonine. The segment at 189–248 (LKRSAGVPFHAKGRGLLRKMDTTTPLKGIPKQAPFRSPTTPSVFSPSGNRTPIPPSRTPL) is RNAPII-binding. 3 disordered regions span residues 213–248 (PLKG…RTPL), 266–296 (GAGR…VENA), and 312–409 (SLNS…TAQT). Phosphoserine occurs at positions 225 and 233. Residues 225 to 238 (SPTTPSVFSPSGNR) show a composition bias toward polar residues. Threonine 277 carries the post-translational modification Phosphothreonine. Residues 277–291 (TLDTEVVEKPTKEET) show a composition bias toward basic and acidic residues. Residues 315 to 341 (SEPTLPSTSYLPSTPSVVPASSYIPSS) are compositionally biased toward low complexity. Serine 363 bears the Phosphoserine mark.

Belongs to the NELF-A family. As to quaternary structure, the NELF complex is composed of NELFA, NELFB, NELFCD and NELFE; NELFA and NELFCD form a stable subcomplex that binds to the N-terminus of NELFB. In vitro, the NELFA:NELFCD subcomplex binds to ssDNA and ssRNA in a sequence- and structure-dependent manner. Interacts with the RNA polymerase II complex when it is not phosphorylated by P-TEFb. Interacts with NELFB. As to expression, ubiquitous. Expressed in brain, heart, spleen, lung, liver, muscle, kidney and testis. Already expressed in 7 dpc embryos.

The protein localises to the nucleus. In terms of biological role, essential component of the NELF complex, a complex that negatively regulates the elongation of transcription by RNA polymerase II. The NELF complex, which acts via an association with the DSIF complex and causes transcriptional pausing, is counteracted by the P-TEFb kinase complex. The sequence is that of Negative elongation factor A (Nelfa) from Mus musculus (Mouse).